The chain runs to 200 residues: Cleavage and polyadenylation specificity factor subunit 5 (200 aa).

The Nudix hydrolase domain maps to L45–E170. The interval N70–F72 is interaction with RNA. The Nudix box signature appears at G77 to S98.

The protein belongs to the Nudix hydrolase family. CPSF5 subfamily. As to quaternary structure, homodimer (via N- and C-terminus); binds RNA as homodimer. Component of the cleavage factor Im (CFIm) complex.

The protein localises to the nucleus. It localises to the cytoplasm. Component of the cleavage factor Im (CFIm) complex that functions as an activator of the pre-mRNA 3'-end cleavage and polyadenylation processing required for the maturation of pre-mRNA into functional mRNAs. CFIm contributes to the recruitment of multiprotein complexes on specific sequences on the pre-mRNA 3'-end, so called cleavage and polyadenylation signals (pA signals). Most pre-mRNAs contain multiple pA signals, resulting in alternative cleavage and polyadenylation (APA) producing mRNAs with variable 3'-end formation. The CFIm complex acts as a key regulator of cleavage and polyadenylation site choice during APA through its binding to 5'-UGUA-3' elements localized in the 3'-untranslated region (UTR) for a huge number of pre-mRNAs. Binds to 5'-UGUA-3' elements localized upstream of pA signals that act as enhancers of pre-mRNA 3'-end processing. The homodimer mediates simultaneous sequence-specific recognition of two 5'-UGUA-3' elements within the pre-mRNA. Plays a role in somatic cell fate transitions and pluripotency by regulating widespread changes in gene expression through an APA-dependent function. Binds to chromatin. The protein is Cleavage and polyadenylation specificity factor subunit 5 of Dictyostelium discoideum (Social amoeba).